Reading from the N-terminus, the 184-residue chain is Large ribosomal subunit protein uL5 (184 aa).

This sequence belongs to the universal ribosomal protein uL5 family. In terms of assembly, part of the 50S ribosomal subunit; part of the 5S rRNA/L5/L18/L25 subcomplex. Contacts the 5S rRNA and the P site tRNA. Forms a bridge to the 30S subunit in the 70S ribosome.

Its function is as follows. This is one of the proteins that bind and probably mediate the attachment of the 5S RNA into the large ribosomal subunit, where it forms part of the central protuberance. In the 70S ribosome it contacts protein S13 of the 30S subunit (bridge B1b), connecting the 2 subunits; this bridge is implicated in subunit movement. Contacts the P site tRNA; the 5S rRNA and some of its associated proteins might help stabilize positioning of ribosome-bound tRNAs. In Fervidobacterium nodosum (strain ATCC 35602 / DSM 5306 / Rt17-B1), this protein is Large ribosomal subunit protein uL5.